We begin with the raw amino-acid sequence, 621 residues long: Nuclear distribution protein nudE homolog 1 (621 aa).

Composition is skewed to polar residues over residues 1 to 20 and 231 to 263; these read MPSA…SRSD and RSPS…TLKT. 4 disordered regions span residues 1–21, 218–372, 389–537, and 569–621; these read MPSA…RSDQ, ELQN…PKSG, ERVQ…GVVN, and ISTP…GETY. Residues 18–219 are a coiled coil; it reads RSDQLAWYKS…IHEKLRNAEL (202 aa). Low complexity-rich tracts occupy residues 264–288 and 300–310; these read SLMS…RKSM and SASDSSFGSRS. The segment covering 323–341 has biased composition (polar residues); that stretch reads SRATSYAFTSNRPTPSVTN. Composition is skewed to low complexity over residues 353–362, 404–414, and 469–496; these read NENTNKHNNN, SPSRTSSRSGS, and SRPS…PSTR. Positions 599 to 613 are enriched in basic and acidic residues; that stretch reads DRLEGDMGPPERKSN.

It belongs to the nudE family. As to quaternary structure, self-associates. Interacts with nudF.

It localises to the cytoplasm. The protein resides in the cytoskeleton. In terms of biological role, required for nuclear migration within hyphae during vegetative growth. The chain is Nuclear distribution protein nudE homolog 1 (nde1) from Aspergillus fumigatus (strain ATCC MYA-4609 / CBS 101355 / FGSC A1100 / Af293) (Neosartorya fumigata).